Reading from the N-terminus, the 143-residue chain is Hemoglobin subunit alpha-2 (143 aa).

An N-acetylserine modification is found at S2. The Globin domain occupies 2–143 (SLSSKDKATV…LALALSEKYR (142 aa)). H60 provides a ligand contact to O2. Residue H89 participates in heme b binding.

It belongs to the globin family. Hb 2 is a heterotetramer of two alpha-2 and two beta-1 chains. Hb 3 is a heterotetramer of two alpha-2 and two beta-2 chains. In terms of tissue distribution, red blood cells.

Its function is as follows. Involved in oxygen transport from gills to the various peripheral tissues. This chain is Hemoglobin subunit alpha-2 (hba2), found in Arctogadus glacialis (Arctic cod).